The chain runs to 647 residues: DNA ligase (647 aa).

Residues 30–34 (DEEYD), 79–80 (SM), and glutamate 106 contribute to the NAD(+) site. The active-site N6-AMP-lysine intermediate is the lysine 108. Residues arginine 129, glutamate 163, and lysine 301 each contribute to the NAD(+) site. 4 residues coordinate Zn(2+): cysteine 395, cysteine 398, cysteine 411, and cysteine 416. A BRCT domain is found at 569-647 (SISNALSGKT…SEYERLKLEV (79 aa)).

Belongs to the NAD-dependent DNA ligase family. LigA subfamily. Mg(2+) is required as a cofactor. The cofactor is Mn(2+).

It catalyses the reaction NAD(+) + (deoxyribonucleotide)n-3'-hydroxyl + 5'-phospho-(deoxyribonucleotide)m = (deoxyribonucleotide)n+m + AMP + beta-nicotinamide D-nucleotide.. Functionally, DNA ligase that catalyzes the formation of phosphodiester linkages between 5'-phosphoryl and 3'-hydroxyl groups in double-stranded DNA using NAD as a coenzyme and as the energy source for the reaction. It is essential for DNA replication and repair of damaged DNA. The protein is DNA ligase of Campylobacter concisus (strain 13826).